Consider the following 382-residue polypeptide: Manganese peroxidase H4 (382 aa).

The N-terminal stretch at 1–24 (MAFGSLLAFVALAAITRAAPTAES) is a signal peptide. 5 cysteine pairs are disulfide-bonded: Cys27–Cys39, Cys38–Cys313, Cys57–Cys141, Cys277–Cys344, and Cys366–Cys373. Residues Glu59 and Glu63 each contribute to the Mn(2+) site. The active-site Proton acceptor is the His70. The Ca(2+) site is built by Asp71, Gly86, Asp88, and Ser90. N-linked (GlcNAc...) asparagine glycosylation is found at Asn100 and Asn155. His197 is a heme b binding site. Position 198 (Thr198) interacts with Ca(2+). Asp203 lines the Mn(2+) pocket. The Ca(2+) site is built by Asp215, Thr217, Thr220, and Asp222. Residue Asn241 is glycosylated (N-linked (GlcNAc...) asparagine).

Belongs to the peroxidase family. Ligninase subfamily. The cofactor is heme b. Requires Ca(2+) as cofactor.

The protein localises to the secreted. It carries out the reaction 2 Mn(2+) + H2O2 + 2 H(+) = 2 Mn(3+) + 2 H2O. Catalyzes the oxidation of Mn(2+) to Mn(3+). The latter, acting as a diffusible redox mediator, is capable of oxidizing a variety of lignin compounds. The polypeptide is Manganese peroxidase H4 (Phanerodontia chrysosporium (White-rot fungus)).